Reading from the N-terminus, the 308-residue chain is Methionyl-tRNA formyltransferase (308 aa).

107–110 contributes to the (6S)-5,6,7,8-tetrahydrofolate binding site; it reads SLLP.

It belongs to the Fmt family.

It catalyses the reaction L-methionyl-tRNA(fMet) + (6R)-10-formyltetrahydrofolate = N-formyl-L-methionyl-tRNA(fMet) + (6S)-5,6,7,8-tetrahydrofolate + H(+). Attaches a formyl group to the free amino group of methionyl-tRNA(fMet). The formyl group appears to play a dual role in the initiator identity of N-formylmethionyl-tRNA by promoting its recognition by IF2 and preventing the misappropriation of this tRNA by the elongation apparatus. This chain is Methionyl-tRNA formyltransferase, found in Carboxydothermus hydrogenoformans (strain ATCC BAA-161 / DSM 6008 / Z-2901).